The chain runs to 698 residues: Effector protein AvrPphDPgy (698 aa).

Positions 1 to 15 (MNPLRSIQHNITTPP) are enriched in polar residues. 2 disordered regions span residues 1 to 36 (MNPLRSIQHNITTPPISGGQPLDAVGPQAQQSHPKR) and 171 to 200 (VDSSSPLLSSPDHSRPPSQHIGSVRRDSDS). Residues 172–181 (DSSSPLLSSP) show a composition bias toward low complexity.

It localises to the secreted. Its function is as follows. Effector protein involved in non-host recognition. This chain is Effector protein AvrPphDPgy (avrPphDPgy), found in Pseudomonas savastanoi pv. glycinea (Pseudomonas syringae pv. glycinea).